We begin with the raw amino-acid sequence, 145 residues long: Polytheonamide B (145 aa).

Positions 1 to 96 are excised as a propeptide; the sequence is MADSDNTPTS…DDDLDQAAGG (96 aa). Position 97 is a 2-oxo-5,5-dimethylhexanoate (threonine 97). At isoleucine 99 the chain carries 3-methylisoleucine. At valine 101 the chain carries 3-methylvaline. Position 102 is a 3-methyl-D-valine (valine 102). 3-methylvaline is present on valine 103. Alanine 104 carries the D-alanine (Ala) modification. Valine 105 bears the 3-methylvaline mark. 3-methyl-D-valine is present on residues valine 106 and valine 110. Asparagine 112 carries the post-translational modification N4-methyl-D-asparagine. The residue at position 113 (threonine 113) is a 3-hydroxyvaline (Thr). Position 117 is a 3-methylvaline (valine 117). An N4-methyl-D-asparagine modification is found at asparagine 118. Glutamine 119 carries the post-translational modification (3S)-3-methylglutamine. 3-hydroxy-D-valine is present on valine 120. Asparagine 124 carries the N4-methyl-D-asparagine modification. At asparagine 126 the chain carries (3R)-N4-methyl-3-hydroxy-D-asparagine. Valine 127 is subject to 3-methylvaline. Valine 128 bears the 3-hydroxy-D-valine mark. 2 positions are modified to N4-methyl-D-asparagine: asparagine 130 and asparagine 132. Asparagine 134 carries the post-translational modification (3R)-N4-methyl-3-hydroxy-D-asparagine. The residue at position 136 (asparagine 136) is an N4-methyl-D-asparagine. Serine 138 is subject to D-serine (Ser). Asparagine 140 bears the D-asparagine mark. Residue methionine 141 is modified to 3,3-dimethylmethionine. Residue asparagine 142 is modified to D-asparagine. A D-threonine modification is found at threonine 144.

In terms of processing, epimerization of most, and perhaps all, L- to D-amino acids is catalyzed by PoyD, when PoyA and PoyD are coexpressed in E.coli. N-methylations are catalyzed by PoyE, when PoyA and PoyE are coexpressed in E.coli. Post-translationally, to obtain 2-oxo-5,5-dimethylhexanoate, Thr-97 is firstly dehydrated by PoyF. The second step possibly corresponds to methylation by PoyB/C, and the third step may be a cleavage by PoyH/J.

Its function is as follows. Antimicrobial peptide active against Gram-positive bacteria (MIC=4-&gt;125 ug/ml). May act by forming transmembrane ion channels, since the peptide rapidly depolarizes the bacterial cytoplasmic membrane, simultaneously decreasing the membrane potential and intracellular potassium contents. In Bacterium symbiont subsp. Theonella swinhoei (strain pTSMAC1), this protein is Polytheonamide B.